The primary structure comprises 363 residues: uncharacterized protein (363 aa).

The protein belongs to the TelA family.

This is an uncharacterized protein from Bacillus subtilis (strain 168).